The sequence spans 86 residues: CRISPR-associated endoribonuclease Cas2 (86 aa).

Asp8 contributes to the Mg(2+) binding site.

Belongs to the CRISPR-associated endoribonuclease Cas2 protein family. As to quaternary structure, homodimer, forms a heterotetramer with a Cas1 homodimer. Requires Mg(2+) as cofactor.

In terms of biological role, CRISPR (clustered regularly interspaced short palindromic repeat), is an adaptive immune system that provides protection against mobile genetic elements (viruses, transposable elements and conjugative plasmids). CRISPR clusters contain sequences complementary to antecedent mobile elements and target invading nucleic acids. CRISPR clusters are transcribed and processed into CRISPR RNA (crRNA). Functions as a ssRNA-specific endoribonuclease. Involved in the integration of spacer DNA into the CRISPR cassette. Plasmid targeted by CRISPR locus P1 transform wild-type cells very poorly. This Haloferax volcanii (strain ATCC 29605 / DSM 3757 / JCM 8879 / NBRC 14742 / NCIMB 2012 / VKM B-1768 / DS2) (Halobacterium volcanii) protein is CRISPR-associated endoribonuclease Cas2.